The sequence spans 288 residues: HTH-type transcriptional regulator CzcR (288 aa).

Positions 1–58 constitute an HTH lysR-type domain; the sequence is MELRDLQIFQSVADQGSVSSAAKELNYVQSNVTTRIKQLENELKTPLFYRHKRGMTLT. Positions 18-37 form a DNA-binding region, H-T-H motif; that stretch reads VSSAAKELNYVQSNVTTRIK.

Belongs to the LysR transcriptional regulatory family.

The polypeptide is HTH-type transcriptional regulator CzcR (czcR) (Bacillus thuringiensis subsp. konkukian (strain 97-27)).